A 245-amino-acid polypeptide reads, in one-letter code: 1-(5-phosphoribosyl)-5-[(5-phosphoribosylamino)methylideneamino] imidazole-4-carboxamide isomerase (245 aa).

Aspartate 7 serves as the catalytic Proton acceptor. The active-site Proton donor is the aspartate 129.

This sequence belongs to the HisA/HisF family.

The protein localises to the cytoplasm. The catalysed reaction is 1-(5-phospho-beta-D-ribosyl)-5-[(5-phospho-beta-D-ribosylamino)methylideneamino]imidazole-4-carboxamide = 5-[(5-phospho-1-deoxy-D-ribulos-1-ylimino)methylamino]-1-(5-phospho-beta-D-ribosyl)imidazole-4-carboxamide. It participates in amino-acid biosynthesis; L-histidine biosynthesis; L-histidine from 5-phospho-alpha-D-ribose 1-diphosphate: step 4/9. The protein is 1-(5-phosphoribosyl)-5-[(5-phosphoribosylamino)methylideneamino] imidazole-4-carboxamide isomerase of Salmonella heidelberg (strain SL476).